The following is a 394-amino-acid chain: Obg-like ATPase 1 (394 aa).

Residues 25–282 form the OBG-type G domain; that stretch reads LKIGIVGLPN…MPPDEAAKYC (258 aa). ATP-binding positions include 34–39, 56–60, and 94–97; these read NVGKST, FCTID, and DIAG. 34–39 contributes to the GTP binding site; the sequence is NVGKST. Ser38 and Thr58 together coordinate Mg(2+). Residues Phe129 and Asn230 each contribute to the GTP site. Residues 230–231, Met231, and 263–265 each bind ATP; these read NM and SCA. Position 263-265 (263-265) interacts with GTP; the sequence is SCA. Positions 303–386 constitute a TGS domain; the sequence is HLIYFFTAGP…QDGDIIFFKF (84 aa).

It belongs to the TRAFAC class OBG-HflX-like GTPase superfamily. OBG GTPase family. YchF/OLA1 subfamily. As to quaternary structure, monomer (Potential). Interacts with GAP1. The cofactor is Mg(2+).

It localises to the cell membrane. The protein localises to the cytoplasm. The protein resides in the cytosol. Activated by GAP1. Functionally, hydrolyzes ATP, and can also hydrolyze GTP with lower efficiency. Has lower affinity for GTP (Potential). Exhibits GTPase activity. Exhibits similar binding affinities and hydrolytic activities toward both GTP and ATP. Binds to the 26 S ribosomal RNA in vitro, but not to the 5.8 S or 18 S rRNA. Confers sensitivity to salinity stress by suppressing the anti-oxidation enzymatic activities and increasing lipid peroxidation thus leading to the accumulation of reactive oxygen species (ROS). This Oryza sativa subsp. japonica (Rice) protein is Obg-like ATPase 1.